Reading from the N-terminus, the 175-residue chain is 3-hydroxydecanoyl-[acyl-carrier-protein] dehydratase (175 aa).

Histidine 71 is an active-site residue.

It belongs to the thioester dehydratase family. FabA subfamily. In terms of assembly, homodimer.

Its subcellular location is the cytoplasm. The catalysed reaction is a (3R)-hydroxyacyl-[ACP] = a (2E)-enoyl-[ACP] + H2O. It carries out the reaction (3R)-hydroxydecanoyl-[ACP] = (2E)-decenoyl-[ACP] + H2O. The enzyme catalyses (2E)-decenoyl-[ACP] = (3Z)-decenoyl-[ACP]. It participates in lipid metabolism; fatty acid biosynthesis. Functionally, necessary for the introduction of cis unsaturation into fatty acids. Catalyzes the dehydration of (3R)-3-hydroxydecanoyl-ACP to E-(2)-decenoyl-ACP and then its isomerization to Z-(3)-decenoyl-ACP. Can catalyze the dehydratase reaction for beta-hydroxyacyl-ACPs with saturated chain lengths up to 16:0, being most active on intermediate chain length. This Rhodopseudomonas palustris (strain BisB5) protein is 3-hydroxydecanoyl-[acyl-carrier-protein] dehydratase.